Reading from the N-terminus, the 75-residue chain is Putative membrane protein insertion efficiency factor (75 aa).

Belongs to the UPF0161 family.

The protein resides in the cell inner membrane. Its function is as follows. Could be involved in insertion of integral membrane proteins into the membrane. The chain is Putative membrane protein insertion efficiency factor from Gloeothece citriformis (strain PCC 7424) (Cyanothece sp. (strain PCC 7424)).